Here is a 113-residue protein sequence, read N- to C-terminus: Gigasin-5 (113 aa).

In terms of tissue distribution, component of the organic matrix of calcified shell layers.

The sequence is that of Gigasin-5 from Magallana gigas (Pacific oyster).